The chain runs to 541 residues: Peptide chain release factor 3 (541 aa).

In terms of domain architecture, tr-type G spans 14–283 (EARRNFAIIS…AFLDYALKPG (270 aa)). GTP-binding positions include 23–30 (SHPDAGKT), 91–95 (DTPGH), and 145–148 (NKLD).

It belongs to the TRAFAC class translation factor GTPase superfamily. Classic translation factor GTPase family. PrfC subfamily.

The protein resides in the cytoplasm. In terms of biological role, increases the formation of ribosomal termination complexes and stimulates activities of RF-1 and RF-2. It binds guanine nucleotides and has strong preference for UGA stop codons. It may interact directly with the ribosome. The stimulation of RF-1 and RF-2 is significantly reduced by GTP and GDP, but not by GMP. This chain is Peptide chain release factor 3, found in Acaryochloris marina (strain MBIC 11017).